Consider the following 361-residue polypeptide: UDP-N-acetylglucosamine--N-acetylmuramyl-(pentapeptide) pyrophosphoryl-undecaprenol N-acetylglucosamine transferase (361 aa).

Residues 13–15, Asn-125, Arg-167, Ser-196, Ile-251, 270–275, and Gln-296 contribute to the UDP-N-acetyl-alpha-D-glucosamine site; these read TGG and ALTVTE.

This sequence belongs to the glycosyltransferase 28 family. MurG subfamily.

The protein resides in the cell inner membrane. The enzyme catalyses di-trans,octa-cis-undecaprenyl diphospho-N-acetyl-alpha-D-muramoyl-L-alanyl-D-glutamyl-meso-2,6-diaminopimeloyl-D-alanyl-D-alanine + UDP-N-acetyl-alpha-D-glucosamine = di-trans,octa-cis-undecaprenyl diphospho-[N-acetyl-alpha-D-glucosaminyl-(1-&gt;4)]-N-acetyl-alpha-D-muramoyl-L-alanyl-D-glutamyl-meso-2,6-diaminopimeloyl-D-alanyl-D-alanine + UDP + H(+). The protein operates within cell wall biogenesis; peptidoglycan biosynthesis. Cell wall formation. Catalyzes the transfer of a GlcNAc subunit on undecaprenyl-pyrophosphoryl-MurNAc-pentapeptide (lipid intermediate I) to form undecaprenyl-pyrophosphoryl-MurNAc-(pentapeptide)GlcNAc (lipid intermediate II). In Psychrobacter arcticus (strain DSM 17307 / VKM B-2377 / 273-4), this protein is UDP-N-acetylglucosamine--N-acetylmuramyl-(pentapeptide) pyrophosphoryl-undecaprenol N-acetylglucosamine transferase.